The primary structure comprises 100 residues: Large ribosomal subunit protein uL23 (100 aa).

This sequence belongs to the universal ribosomal protein uL23 family. Part of the 50S ribosomal subunit. Contacts protein L29, and trigger factor when it is bound to the ribosome.

One of the early assembly proteins it binds 23S rRNA. One of the proteins that surrounds the polypeptide exit tunnel on the outside of the ribosome. Forms the main docking site for trigger factor binding to the ribosome. The polypeptide is Large ribosomal subunit protein uL23 (Proteus mirabilis (strain HI4320)).